Reading from the N-terminus, the 97-residue chain is MNQIELMRTLIAPVVSEKSTAGAEKNRQFVFRVKPAASKLQIKSAVELMFGVKVDSVRILNVKGKSKRFGRFMGQRSDWKKAYVKLKPGFDIELAVN.

The protein belongs to the universal ribosomal protein uL23 family. As to quaternary structure, part of the 50S ribosomal subunit. Contacts protein L29, and trigger factor when it is bound to the ribosome.

In terms of biological role, one of the early assembly proteins it binds 23S rRNA. One of the proteins that surrounds the polypeptide exit tunnel on the outside of the ribosome. Forms the main docking site for trigger factor binding to the ribosome. The protein is Large ribosomal subunit protein uL23 of Methylococcus capsulatus (strain ATCC 33009 / NCIMB 11132 / Bath).